A 322-amino-acid chain; its full sequence is Uridylate-specific endoribonuclease EndoU (322 aa).

The helical transmembrane segment at 25-45 (FVIVGLLITIGILSWHFYEYF) threads the bilayer. Residues 53–322 (TPDDVLTLSK…LIGTVYPDSS (270 aa)) enclose the EndoU domain. Active-site residues include His-200, His-215, and Lys-259.

It belongs to the ENDOU family. As to quaternary structure, monomer. Requires Mn(2+) as cofactor. Predominantly expressed in head.

The protein resides in the membrane. The catalysed reaction is a ribonucleotidyl-ribonucleotide-RNA = a 3'-end 2',3'-cyclophospho-ribonucleotide-RNA + a 5'-end dephospho-ribonucleoside-RNA. Endoribonuclease that cleaves single-stranded RNAs at uridylates and releases products that have 2'-3'-cyclic phosphate termini. Preferentially cleaves single stranded RNA at poly-U sites with CU, UC and AU sites cleaved less efficiently. May target mRNAs encoding proteins involved in lipid metabolism to regulate their expression. Regulates levels of TBPH protein, but not mRNA, by an as yet unknown mechanism. Important for neuronal development or function. This Drosophila melanogaster (Fruit fly) protein is Uridylate-specific endoribonuclease EndoU.